A 271-amino-acid chain; its full sequence is Sulfur carrier protein FdhD (271 aa).

The active-site Cysteine persulfide intermediate is C114.

It belongs to the FdhD family.

It is found in the cytoplasm. Its function is as follows. Required for formate dehydrogenase (FDH) activity. Acts as a sulfur carrier protein that transfers sulfur from IscS to the molybdenum cofactor prior to its insertion into FDH. This Agrobacterium fabrum (strain C58 / ATCC 33970) (Agrobacterium tumefaciens (strain C58)) protein is Sulfur carrier protein FdhD.